Here is a 525-residue protein sequence, read N- to C-terminus: GMP synthase [glutamine-hydrolyzing] (525 aa).

The region spanning 9 to 207 (RILILDFGSQ…VRDICQCEAL (199 aa)) is the Glutamine amidotransferase type-1 domain. Cys-86 functions as the Nucleophile in the catalytic mechanism. Catalysis depends on residues His-181 and Glu-183. Positions 208 to 400 (WTPAKIIDDA…LGLPYNMLYR (193 aa)) constitute a GMPS ATP-PPase domain. 235-241 (SGGVDSS) is an ATP binding site.

Homodimer.

The catalysed reaction is XMP + L-glutamine + ATP + H2O = GMP + L-glutamate + AMP + diphosphate + 2 H(+). The protein operates within purine metabolism; GMP biosynthesis; GMP from XMP (L-Gln route): step 1/1. Functionally, catalyzes the synthesis of GMP from XMP. In Pectobacterium carotovorum subsp. carotovorum (strain PC1), this protein is GMP synthase [glutamine-hydrolyzing].